A 302-amino-acid polypeptide reads, in one-letter code: Putative S-adenosyl-L-methionine-dependent methyltransferase MAP_1622c (302 aa).

Residues Asp-129 and Asp-158–Leu-159 each bind S-adenosyl-L-methionine.

This sequence belongs to the UPF0677 family.

Exhibits S-adenosyl-L-methionine-dependent methyltransferase activity. The polypeptide is Putative S-adenosyl-L-methionine-dependent methyltransferase MAP_1622c (Mycolicibacterium paratuberculosis (strain ATCC BAA-968 / K-10) (Mycobacterium paratuberculosis)).